Reading from the N-terminus, the 302-residue chain is Ubiquinone biosynthesis protein COQ4, mitochondrial (302 aa).

The transit peptide at 1-19 directs the protein to the mitochondrion; sequence MNSSPARAVRALVQSQSRQ. Zn(2+)-binding residues include His-176, Asp-177, His-180, and Glu-192. The segment covering 268–282 has biased composition (basic and acidic residues); that stretch reads PPPDMRDARKRERDA. Positions 268 to 302 are disordered; it reads PPPDMRDARKRERDARRRRKQLETEAQQGLDAASL.

Belongs to the COQ4 family. Component of a multi-subunit COQ enzyme complex, composed of at least COQ3, COQ4, COQ5, COQ6, COQ7 and COQ9. Requires Zn(2+) as cofactor.

The protein localises to the mitochondrion inner membrane. It catalyses the reaction a 4-hydroxy-3-methoxy-5-(all-trans-polyprenyl)benzoate + H(+) = a 2-methoxy-6-(all-trans-polyprenyl)phenol + CO2. It participates in cofactor biosynthesis; ubiquinone biosynthesis. Functionally, lyase that catalyzes the C1-decarboxylation of 4-hydroxy-3-methoxy-5-(all-trans-polyprenyl)benzoic acid into 2-methoxy-6-(all-trans-polyprenyl)phenol during ubiquinone biosynthesis. This is Ubiquinone biosynthesis protein COQ4, mitochondrial from Pyricularia oryzae (strain 70-15 / ATCC MYA-4617 / FGSC 8958) (Rice blast fungus).